Consider the following 206-residue polypeptide: Protein GET1 (206 aa).

At 1–4 (MPSL) the chain is on the lumenal side. The chain crosses the membrane as a helical span at residues 5-24 (LITILLLNIVIYVINTIGAA). Residues 25–110 (TIDSLLWLFY…SFDMTVKSVR (86 aa)) are Cytoplasmic-facing. Residues 42 to 99 (SHMAREQRRLKREVIQLKREMNATSSQDEFAKWAKLRRRHDKALETYEAKNNELTQCK) are a coiled coil. The chain crosses the membrane as a helical span at residues 111 to 131 (WAATSGLMLFLQFWYSKRPIF). Residues 132-155 (TLPPGWIPWQVQWVLSFPRAPMGT) lie on the Lumenal side of the membrane. The helical transmembrane segment at 156-172 (VSIQIWGGACATVVALV) threads the bilayer. Over 173 to 206 (GDAVGATMGFVSASKKEGMKVGAGVGEKEGKKSQ) the chain is Cytoplasmic.

Belongs to the WRB/GET1 family. Interacts with GET3.

It localises to the endoplasmic reticulum membrane. Required for the post-translational delivery of tail-anchored (TA) proteins to the endoplasmic reticulum. Acts as a membrane receptor for soluble GET3, which recognizes and selectively binds the transmembrane domain of TA proteins in the cytosol. This is Protein GET1 from Ajellomyces dermatitidis (strain ER-3 / ATCC MYA-2586) (Blastomyces dermatitidis).